A 341-amino-acid polypeptide reads, in one-letter code: Short chain dehydrogenase FGM9 (341 aa).

NADP(+) is bound by residues leucine 38, lysine 63, aspartate 88, and asparagine 114. Active-site proton donor residues include serine 167 and tyrosine 200. Tyrosine 200 and lysine 204 together coordinate NADP(+). Residue lysine 204 is the Lowers pKa of active site Tyr of the active site.

It belongs to the short-chain dehydrogenases/reductases (SDR) family.

The protein operates within secondary metabolite biosynthesis. Short chain dehydrogenase; part of the Fg3_54/C64 gene cluster that mediates the biosynthesis of the octapeptide fusaoctaxin A, a virulence factor that is required for cell-to-cell invasiveness of plant host. The 2 nonribosomal peptide synthetases NRPS9 and NRPS5 form an assembly line which likely utilizes GABA as a starter unit (loaded on the unique module M1 of NRPS9) and sequentially incorporates seven extender units composed of the residues L-Ala, L-allo-Ile, L-Ser, L-Val, L-Ser, L-Leu and L-Leu, respectively. During the process, each of the residues that are tethered on modules M3-M7 of NRPS5 containing an E domain can undergo an epimerization reaction to produce a D-configuration before the transpeptidation reaction occurs. The elongation of the peptidyl chain might be terminated by module M8-mediated L-Leu incorporation, followed by R domain-catalyzed 4 electron reduction to release the resulting octapeptide from the assembly line as an alcohol. Fusaoctaxin A is cleaved by the cluster specific ABC transporter FGM5 to the pentapeptide fusapentaxin A and the tripeptide fusatrixin A. The other enzymes from the cluster, FGM1, FGM2, FGM3 and FGM9 seem not to be involved in the biosynthesis of fusaoctaxin A and their functions have still to be determined. This Gibberella zeae (strain ATCC MYA-4620 / CBS 123657 / FGSC 9075 / NRRL 31084 / PH-1) (Wheat head blight fungus) protein is Short chain dehydrogenase FGM9.